Here is a 124-residue protein sequence, read N- to C-terminus: Small ribosomal subunit protein uS12 (124 aa).

The disordered stretch occupies residues methionine 1–proline 28. 3-methylthioaspartic acid is present on aspartate 89. The disordered stretch occupies residues threonine 104 to aspartate 124.

It belongs to the universal ribosomal protein uS12 family. In terms of assembly, part of the 30S ribosomal subunit. Contacts proteins S8 and S17. May interact with IF1 in the 30S initiation complex.

In terms of biological role, with S4 and S5 plays an important role in translational accuracy. Functionally, interacts with and stabilizes bases of the 16S rRNA that are involved in tRNA selection in the A site and with the mRNA backbone. Located at the interface of the 30S and 50S subunits, it traverses the body of the 30S subunit contacting proteins on the other side and probably holding the rRNA structure together. The combined cluster of proteins S8, S12 and S17 appears to hold together the shoulder and platform of the 30S subunit. The protein is Small ribosomal subunit protein uS12 of Prochlorococcus marinus (strain MIT 9301).